Consider the following 110-residue polypeptide: Late cornified envelope protein 1A (110 aa).

The segment covering 1–10 (MSCQQSQQQC) has biased composition (low complexity). Disordered stretches follow at residues 1–23 (MSCQ…CPPK) and 83–110 (QSSG…GGCC). A compositionally biased stretch (pro residues) spans 11 to 23 (QPPPKCTPKCPPK). The segment covering 83–95 (QSSGCCSQPSGGS) has biased composition (low complexity). Positions 96–110 (SCCGGDSGQHSGGCC) are enriched in gly residues.

It belongs to the LCE family. Interacts with CYSRT1. Skin-specific. Expression was readily detected in adult trunk skin, adult arm skin, fetal skin, penal skin, vulva, esophagus and tongue. Not expressed in the cervix, rectum, lung, colon, or placenta.

In terms of biological role, precursors of the cornified envelope of the stratum corneum. This chain is Late cornified envelope protein 1A (LCE1A), found in Homo sapiens (Human).